The sequence spans 358 residues: Ganglioside-induced differentiation-associated protein 1 (358 aa).

Positions 24–105 (VKLILYHWTH…YLEQTFLDER (82 aa)) constitute a GST N-terminal domain. Residues Lys50, Lys172, Lys173, Lys188, and Lys190 each participate in a glycyl lysine isopeptide (Lys-Gly) (interchain with G-Cter in ubiquitin) cross-link. Positions 153–309 (PAYATTRIRS…LISAVLPTAF (157 aa)) constitute a GST C-terminal domain. Lys203 bears the N6-acetyllysine; alternate mark. Lys203 participates in a covalent cross-link: Glycyl lysine isopeptide (Lys-Gly) (interchain with G-Cter in ubiquitin); alternate. Glycyl lysine isopeptide (Lys-Gly) (interchain with G-Cter in ubiquitin) cross-links involve residues Lys206, Lys207, and Lys214. A run of 2 helical transmembrane segments spans residues 292 to 312 (VLGH…FRVA) and 320 to 340 (LGTT…FMLF). The segment at 320–358 (LGTTLVVGLLAGVGYFAFMLFRKRLGSMILAFRPRPNYF) is required for mitochondrial localization.

It belongs to the GST superfamily. As to quaternary structure, homodimer. Ubiquitinated by PRKN during mitophagy, leading to its degradation and enhancement of mitophagy. Deubiquitinated by USP30. Highly expressed in whole brain and spinal cord. Predominant expression in central tissues of the nervous system not only in neurons but also in Schwann cells.

Its subcellular location is the mitochondrion outer membrane. The protein resides in the cytoplasm. Regulates the mitochondrial network by promoting mitochondrial fission. The polypeptide is Ganglioside-induced differentiation-associated protein 1 (GDAP1) (Homo sapiens (Human)).